Here is a 105-residue protein sequence, read N- to C-terminus: Nucleoid-associated protein SE_2306 (105 aa).

Residues 1–40 (MRGGGNMQQMMKQMQKMQKKMAQEQEKLKEERVAGTAGGG) are disordered. The span at 7 to 16 (MQQMMKQMQK) shows a compositional bias: low complexity. Residues 21 to 33 (MAQEQEKLKEERV) show a composition bias toward basic and acidic residues.

It belongs to the YbaB/EbfC family. Homodimer.

The protein resides in the cytoplasm. It localises to the nucleoid. Binds to DNA and alters its conformation. May be involved in regulation of gene expression, nucleoid organization and DNA protection. This is Nucleoid-associated protein SE_2306 from Staphylococcus epidermidis (strain ATCC 12228 / FDA PCI 1200).